The primary structure comprises 821 residues: V-type proton ATPase subunit a3 (821 aa).

Ala-2 is modified (N-acetylalanine). Topologically, residues 2-421 (AESGGGGGCC…ANPGVFTIVT (420 aa)) are cytoplasmic. Positions 97–144 (KENDIDLDDVEVKLGELEAELVEINANNDKLQRSYNELMEYKLVLQKA) form a coiled coil. Ser-174 is subject to Phosphoserine. Residues 422-442 (FPFLFAVMFGDWGHGICILLA) traverse the membrane as a helical segment. Residues 443-469 (TMYLILKEKKLASQKLGDIMEMAFGGR) are Vacuolar-facing. The chain crosses the membrane as a helical span at residues 470-490 (YVILMMSLFSIYTGLIYNEFF). Topologically, residues 491 to 548 (SIPFPLFAPSAYDCRDVSCSEATTIGLIKVRDTYPFGLDPVWHGSRSELPFLNSLKMK) are cytoplasmic. Residues 549-569 (MSILLGVSQMNLGIIMSYFNA) traverse the membrane as a helical segment. Residues 570–581 (RFFKSSVNIWFQ) are Vacuolar-facing. Residues 582-602 (FIPQMIFLNSLFGYLSVLIII) traverse the membrane as a helical segment. The Cytoplasmic segment spans residues 603-640 (KWCTGSQADLYHVMIYMFLSPMDELGENQLFPHQKTLQ). Residues 641 to 661 (LVLLFLALVSVPCMLLPKPFI) form a helical membrane-spanning segment. Residues 662 to 758 (LKKQHEARHQ…LLLAWGYNNP (97 aa)) lie on the Vacuolar side of the membrane. Residues 759–779 (LILIVGVLVFIFATVGVLLVM) traverse the membrane as a helical segment. At 780–821 (ETLSAFLHALRLHWVEFQNKFYEGDGYKFAPFTFIFTANEDE) the chain is on the cytoplasmic side.

It belongs to the V-ATPase 116 kDa subunit family. V-ATPase is a heteromultimeric enzyme composed of a peripheral catalytic V1 complex (components A to H) attached to an integral membrane V0 proton pore complex (components: a, c, c'', d and e). Expressed in etiolated seedlings hypocotyls.

It localises to the vacuole membrane. In terms of biological role, essential component of the vacuolar proton pump (V-ATPase), a multimeric enzyme that catalyzes the translocation of protons across the membranes. Required for assembly and activity of the V-ATPase. Involved in vacuolar nutrient storage (e.g. accumulation and storage of nitrate) and in tolerance to some toxic ions (e.g. zinc ions sequestration in vacuoles). In Arabidopsis thaliana (Mouse-ear cress), this protein is V-type proton ATPase subunit a3 (VHA-a3).